A 192-amino-acid chain; its full sequence is Adapter protein MecA (192 aa).

Belongs to the MecA family. Homodimer.

Enables the recognition and targeting of unfolded and aggregated proteins to the ClpC protease or to other proteins involved in proteolysis. Acts negatively in the development of competence by binding ComK and recruiting it to the ClpCP protease. When overexpressed, inhibits sporulation. Also involved in Spx degradation by ClpC. This Oceanobacillus iheyensis (strain DSM 14371 / CIP 107618 / JCM 11309 / KCTC 3954 / HTE831) protein is Adapter protein MecA.